We begin with the raw amino-acid sequence, 323 residues long: HTH-type transcriptional activator CmpR (323 aa).

One can recognise an HTH lysR-type domain in the interval 4–61; the sequence is LTLHQLKVFEAAARHSSFTRAAEELYLTQPTVSIQVKQLTKAVGLPLFEQIGKRLYLT. A DNA-binding region (H-T-H motif) is located at residues 21–40; the sequence is FTRAAEELYLTQPTVSIQVK. The segment at 304–323 is disordered; it reads IPESTTTDPELDAPQPVVGV.

This sequence belongs to the LysR transcriptional regulatory family.

Its subcellular location is the cytoplasm. Functionally, activates transcription of the cmpABCD operon under carbon dioxide-limited conditions. This is HTH-type transcriptional activator CmpR (cmpR) from Synechococcus elongatus (strain ATCC 33912 / PCC 7942 / FACHB-805) (Anacystis nidulans R2).